A 429-amino-acid polypeptide reads, in one-letter code: Palmitoyltransferase SWF1 (429 aa).

The Lumenal portion of the chain corresponds to 1–3 (MGT). The helical transmembrane segment at 4–24 (IAIIAAVILGISFMTFVAFFG) threads the bilayer. Over 25-79 (RLPALRNTPISFLHRLIWIHLPNGILTVDRTLTNGRLTTSLTRLGRHLWYDQHPT) the chain is Cytoplasmic. A helical transmembrane segment spans residues 80 to 100 (ILIFFFLLLSVGEYLYLPVAW). Over 101 to 112 (PHFSFTHKFFGT) the chain is Lumenal. The helical transmembrane segment at 113-133 (IAILCPYIFLYLSAYTDPGVI) threads the bilayer. At 134-201 (NAKTHVREMA…CVGANNQRWF (68 aa)) the chain is on the cytoplasmic side. One can recognise a DHHC domain in the interval 156 to 206 (TSCETCHLLKPARSKHCSICKKCVGRMDHHCIFINNCVGANNQRWFILLLL). A helical transmembrane segment spans residues 202–222 (ILLLLSTAILTLYGGVLGLVI). Topologically, residues 223-274 (IRAKIQARFPYWTLMPWWTSTQAWNSGDLDFHRWLLLWSWGLQSGVAMGGVT) are lumenal. Residues 275-295 (LLALLTTPLVWGLLGYHLWLV) form a helical membrane-spanning segment. Residues 296 to 429 (YCGTTTNESM…ERGRNRRRSS (134 aa)) lie on the Cytoplasmic side of the membrane. Residues 408–421 (GRSPVDEREFGRER) are compositionally biased toward basic and acidic residues. The disordered stretch occupies residues 408–429 (GRSPVDEREFGRERGRNRRRSS).

Belongs to the DHHC palmitoyltransferase family. SWF1 subfamily.

The protein resides in the endoplasmic reticulum membrane. It catalyses the reaction L-cysteinyl-[protein] + hexadecanoyl-CoA = S-hexadecanoyl-L-cysteinyl-[protein] + CoA. Its function is as follows. Palmitoyltransferase that targets several endosomal SNAREs. Palmitoylates the SNAREs at cysteine residues close to the cytoplasmic end of their transmembrane domain. May have a role in the cellular quality control of transmembrane domain-containing proteins. In Neurospora crassa (strain ATCC 24698 / 74-OR23-1A / CBS 708.71 / DSM 1257 / FGSC 987), this protein is Palmitoyltransferase SWF1 (swf-1).